We begin with the raw amino-acid sequence, 200 residues long: LHFPL tetraspan subfamily member 6 protein (200 aa).

Residues 1-21 form the signal peptide; it reads MASSLTCAGVIWALLSFLCAA. 2 consecutive transmembrane segments (helical) span residues 84-104 and 123-143; these read ICTV…LTAI and GIQF…PLGW. Asn-154 carries an N-linked (GlcNAc...) asparagine glycan. Residues 172–192 form a helical membrane-spanning segment; that stretch reads CTGAGAAAAMVLCTWMACFAG.

Belongs to the LHFP family.

It localises to the membrane. This chain is LHFPL tetraspan subfamily member 6 protein, found in Danio rerio (Zebrafish).